Consider the following 957-residue polypeptide: Exoribonuclease II, mitochondrial (957 aa).

The transit peptide at 1-54 (MNYRQLFLLQNVNLESNYLLKRVCLSLKLSPCKLTRKFHHACPSSSKVLKYFRI) directs the protein to the mitochondrion. Residues 503–843 (RVDLRHLKAF…FTHHQIQSVL (341 aa)) enclose the RNB domain.

It belongs to the RNR ribonuclease family.

Its subcellular location is the mitochondrion. It catalyses the reaction Exonucleolytic cleavage in the 3'- to 5'-direction to yield nucleoside 5'-phosphates.. Required for intron-independent turnover and processing of mitochondrial RNA. Participates in 3'-mtRNA processing where it hydrolyzes single-stranded RNA or partially double-stranded RNA with 3'-single-stranded tails. The chain is Exoribonuclease II, mitochondrial (rpm1) from Schizosaccharomyces pombe (strain 972 / ATCC 24843) (Fission yeast).